The chain runs to 540 residues: Phosphoenolpyruvate carboxykinase (ATP) (540 aa).

R65 lines the substrate pocket. K87 bears the N6-acetyllysine mark. Residues Y207 and K213 each coordinate substrate. ATP-binding positions include K213, H232, and 248 to 256 (GLSGTGKTT). The Mn(2+) site is built by K213 and H232. D269 serves as a coordination point for Mn(2+). ATP-binding positions include E297, R333, 449–450 (RI), and T455. Substrate is bound at residue R333. K523 bears the N6-acetyllysine mark.

The protein belongs to the phosphoenolpyruvate carboxykinase (ATP) family. As to quaternary structure, monomer. Mn(2+) is required as a cofactor.

It is found in the cytoplasm. The enzyme catalyses oxaloacetate + ATP = phosphoenolpyruvate + ADP + CO2. The protein operates within carbohydrate biosynthesis; gluconeogenesis. Functionally, involved in the gluconeogenesis. Catalyzes the conversion of oxaloacetate (OAA) to phosphoenolpyruvate (PEP) through direct phosphoryl transfer between the nucleoside triphosphate and OAA. The polypeptide is Phosphoenolpyruvate carboxykinase (ATP) (Shigella flexneri serotype 5b (strain 8401)).